A 60-amino-acid chain; its full sequence is UPF0434 protein Dtpsy_1553 (60 aa).

This sequence belongs to the UPF0434 family.

The sequence is that of UPF0434 protein Dtpsy_1553 from Acidovorax ebreus (strain TPSY) (Diaphorobacter sp. (strain TPSY)).